We begin with the raw amino-acid sequence, 346 residues long: Zinc finger CCCH domain-containing protein 28 (346 aa).

A disordered region spans residues 1-99; it reads MASAETPNPD…SPRYPDGKRR (99 aa). The segment covering 17–41 has biased composition (low complexity); sequence DAAAAADPAAAAPAAAATDPAAAGS. Residues 62-86 are compositionally biased toward basic residues; it reads RSSRSRSRSPRRGRSRSRSRSRSRG. 6 consecutive C3H1-type zinc fingers follow at residues 103–131, 138–165, 181–209, 211–237, 282–308, and 314–340; these read DLNV…HPHP, DSKV…HPPP, KVKM…HHSP, EDCA…HVMA, NYGV…HPDL, and NTQV…HPPA.

This Oryza sativa subsp. japonica (Rice) protein is Zinc finger CCCH domain-containing protein 28.